A 158-amino-acid chain; its full sequence is Glycine/sarcosine/betaine reductase complex component A1 (158 aa).

Sec-44 is an active-site residue. A non-standard amino acid (selenocysteine) is located at residue Sec-44.

The protein belongs to the GrdA family. As to quaternary structure, monomer. Component of the glycine, sarcosine and betaine reductase complexes, together with components B and C.

The enzyme catalyses acetyl phosphate + [thioredoxin]-disulfide + NH4(+) + H2O = [thioredoxin]-dithiol + glycine + phosphate + H(+). It carries out the reaction acetyl phosphate + methylamine + [thioredoxin]-disulfide + H2O = sarcosine + [thioredoxin]-dithiol + phosphate + H(+). The catalysed reaction is acetyl phosphate + trimethylamine + [thioredoxin]-disulfide + H2O = glycine betaine + [thioredoxin]-dithiol + phosphate + H(+). In terms of biological role, in the first step of glycine, betaine and sarcosine reductases, the substrate is bound to component PB via a Schiff base intermediate. Then the PB-activated substrate is nucleophilically attacked by the selenol anion of component PA to transform it to a carboxymethylated selenoether and the respective amine. By action of component PC, acetyl phosphate is formed, leaving component PA in its oxidized state. Finally component PA becomes reduced by the thioredoxin system to start a new catalytic cycle of reductive deamination. This is Glycine/sarcosine/betaine reductase complex component A1 (grdA1) from Peptoclostridium acidaminophilum (Eubacterium acidaminophilum).